The primary structure comprises 178 residues: MSRENNCTTADLAWGIPSITQAWGLWALFGVVTMLLLISLAALLSQWTRGRRRTQEEQGPPSGRSVEEVPLYGNLHYLQTGRLSEESRSEEQDPSSGGLARGAEEATCYTSLQLRPAQGRIPSSGTPIKYCEVVLDSEPKPQASGPEPELYASVCAQTRRARASFPDQAYANSQPAPS.

The Extracellular segment spans residues 1-23; that stretch reads MSRENNCTTADLAWGIPSITQAW. N6 carries an N-linked (GlcNAc...) asparagine glycan. The chain crosses the membrane as a helical; Signal-anchor for type III membrane protein span at residues 24-44; that stretch reads GLWALFGVVTMLLLISLAALL. Over 45 to 178 the chain is Cytoplasmic; that stretch reads SQWTRGRRRT…AYANSQPAPS (134 aa). Phosphoserine occurs at positions 62 and 65. Residue Y72 is modified to Phosphotyrosine. Positions 72–75 are interaction with GRB2; it reads YGNL. The segment at 81-102 is disordered; that stretch reads GRLSEESRSEEQDPSSGGLARG. Residues S84, S87, and S89 each carry the phosphoserine modification. Position 109 is a phosphotyrosine (Y109). The residue at position 126 (T126) is a Phosphothreonine. Positions 128–133 are interaction with PTPN11; sequence IKYCEV. 2 positions are modified to phosphotyrosine: Y130 and Y151. The tract at residues 151-154 is interaction with CSK; sequence YASV. The residue at position 164 (S164) is a Phosphoserine. Y170 is subject to Phosphotyrosine. Positions 170-173 are interaction with GRB2; that stretch reads YANS.

In terms of assembly, homodimer; disulfide-linked. When phosphorylated, interacts with PTPN11/SHP2, GRB2 and CSK. Phosphorylated on tyrosines upon TCR activation; which promotes recruitment of PTPN11, GRB2 and CSK. Lymph node, spleen and thymus.

It localises to the cell membrane. Negatively regulates T-cell antigen receptor (TCR)-mediated signaling. Involved in positive selection of T-cells. The chain is Signaling threshold-regulating transmembrane adapter 1 (Sit1) from Rattus norvegicus (Rat).